The following is a 197-amino-acid chain: Large ribosomal subunit protein bL25 (197 aa).

The protein belongs to the bacterial ribosomal protein bL25 family. CTC subfamily. As to quaternary structure, part of the 50S ribosomal subunit; part of the 5S rRNA/L5/L18/L25 subcomplex. Contacts the 5S rRNA. Binds to the 5S rRNA independently of L5 and L18.

Its function is as follows. This is one of the proteins that binds to the 5S RNA in the ribosome where it forms part of the central protuberance. In Lawsonia intracellularis (strain PHE/MN1-00), this protein is Large ribosomal subunit protein bL25.